Reading from the N-terminus, the 290-residue chain is MTITGKTKVAGIIGWPVSHSLSPPMHNAAFEALGLDFTYVPFPVAPERLAAGIAGLAALGVVGFSVTIPHKVAILPLLDRVTPEAELIGAVNTVAVEEGALTGYNTDGIGLLSALRSKLGFHPEGRSVLVLGAGGAARSAVASLGLAGAGRVEVANRSPDAGRCLAEAMRERLAGTDFGFQPLGQISDKGYMSSFDLVVNTTSVGMAGDAFAGLDLAALKPGACVYDMVYAPPVTPLLAQAEAAGVPWANGLGMLAAQGEAAFRIWTGAIPPEGCMEKALAARLTTPGNP.

Residues 20-22 (SLS) and threonine 67 each bind shikimate. Lysine 71 functions as the Proton acceptor in the catalytic mechanism. Shikimate is bound by residues asparagine 92 and aspartate 107. NADP(+)-binding positions include 132–136 (GAGGA) and methionine 228. Residue tyrosine 230 coordinates shikimate. Residue glycine 251 coordinates NADP(+).

This sequence belongs to the shikimate dehydrogenase family. In terms of assembly, homodimer.

It catalyses the reaction shikimate + NADP(+) = 3-dehydroshikimate + NADPH + H(+). The protein operates within metabolic intermediate biosynthesis; chorismate biosynthesis; chorismate from D-erythrose 4-phosphate and phosphoenolpyruvate: step 4/7. Involved in the biosynthesis of the chorismate, which leads to the biosynthesis of aromatic amino acids. Catalyzes the reversible NADPH linked reduction of 3-dehydroshikimate (DHSA) to yield shikimate (SA). The chain is Shikimate dehydrogenase (NADP(+)) from Citrifermentans bemidjiense (strain ATCC BAA-1014 / DSM 16622 / JCM 12645 / Bem) (Geobacter bemidjiensis).